The chain runs to 91 residues: Small ribosomal subunit protein uS19 (91 aa).

The protein belongs to the universal ribosomal protein uS19 family.

In terms of biological role, protein S19 forms a complex with S13 that binds strongly to the 16S ribosomal RNA. This is Small ribosomal subunit protein uS19 from Prochlorococcus marinus (strain MIT 9303).